The primary structure comprises 328 residues: Malate dehydrogenase (328 aa).

Residue 11-17 (GAAGQIG) coordinates NAD(+). Positions 94 and 100 each coordinate substrate. Residues N107, Q114, and 131–133 (VGN) each bind NAD(+). 2 residues coordinate substrate: N133 and R164. Catalysis depends on H189, which acts as the Proton acceptor.

It belongs to the LDH/MDH superfamily. MDH type 2 family.

The enzyme catalyses (S)-malate + NAD(+) = oxaloacetate + NADH + H(+). In terms of biological role, catalyzes the reversible oxidation of malate to oxaloacetate. This chain is Malate dehydrogenase, found in Xanthomonas campestris pv. campestris (strain 8004).